The chain runs to 709 residues: F-box only protein 40 (709 aa).

The segment at 53–112 (EHQLLCPLEQVPCLNSEYGCPLSMSRHKLAKHLQVCPASVVCCSMEWNRWPNVDSETTLH) adopts a TRAF-type zinc-finger fold. Positions 232-280 (TNSSASCESKNKNDSEKEQISSGHNMVEGEGAPKKKEPQENQKQQDVRT) are disordered. 2 stretches are compositionally biased toward basic and acidic residues: residues 240-250 (SKNKNDSEKEQ) and 262-277 (GAPKKKEPQENQKQQD). The 55-residue stretch at 570-624 (QNSLTSLPLEILKYIAGFLDSVSLAQLSQVSVLMRNICATLLQERGMVLLQWKKK) folds into the F-box domain.

As to quaternary structure, directly interacts with SKP1 and CUL1. In terms of tissue distribution, expressed only in heart and skeletal muscle.

Its subcellular location is the cytoplasm. Probable substrate-recognition component of the SCF (SKP1-CUL1-F-box protein)-type E3 ubiquitin ligase complex that may function in myogenesis. The chain is F-box only protein 40 (FBXO40) from Homo sapiens (Human).